The chain runs to 999 residues: Ulvan lyase, long isoform (999 aa).

The first 21 residues, 1–21, serve as a signal peptide directing secretion; the sequence is MKCLKTLLVSTTLLTAFSLNA. Position 126–127 (126–127) interacts with substrate; the sequence is SH. His127 serves as the catalytic Proton donor/acceptor. Ca(2+) contacts are provided by Asp189, Asp199, and Lys201. Positions 280 and 297 each coordinate substrate. Residues Asp300, Asp303, and Tyr305 each coordinate Ca(2+). Tyr361 contributes to the substrate binding site.

It belongs to the polysaccharide lyase 24 family.

Its function is as follows. Ulvan lyase involved in ulvan degradation. Ulvan is the main polysaccharide component of the Ulvales (green seaweed) cell wall. It is composed of disaccharide building blocks comprising 3-sulfated rhamnose (Rha3S) linked to D-glucuronic acid (GlcA), L-iduronic acid (IduA), or D-xylose (Xyl). Ulvan lyase catalyzes preferentially the endolytic cleavage of the glycosidic bond between Rha3S and the uronic acid GlcA, but not IduA, producing oligosaccharides that have unsaturated 4-deoxy-L-threo-hex-4-enopyranosiduronic acid (deltaUA) at the non-reducing end. The most abundant end products in the degradation of the ulvan polysaccharide were deltaUA-Rha3S disaccharides and deltaUA-Rha3S-IduA-Rha3S and deltaUA-Rha3S-Xyl-Rha3S tetrasaccharides. The sequence is that of Ulvan lyase, long isoform from Alteromonas sp. (strain LOR).